A 211-amino-acid chain; its full sequence is DNA dC-&gt;dU-editing enzyme APOBEC-3H (211 aa).

Residues 4 to 126 (LTAKTFSLQF…RRQQEGLRLL (123 aa)) enclose the CMP/dCMP-type deaminase domain. H54 contributes to the Zn(2+) binding site. The active-site Proton donor is the E56. Residues C85 and C88 each coordinate Zn(2+).

This sequence belongs to the cytidine and deoxycytidylate deaminase family. Homodimer. It depends on Zn(2+) as a cofactor.

Its subcellular location is the cytoplasm. The enzyme catalyses a 2'-deoxycytidine in single-stranded DNA + H2O + H(+) = a 2'-deoxyuridine in single-stranded DNA + NH4(+). In terms of biological role, DNA deaminase (cytidine deaminase) which may act as an inhibitor of retrovirus replication and retrotransposon mobility via deaminase-dependent and -independent mechanisms. This chain is DNA dC-&gt;dU-editing enzyme APOBEC-3H, found in Pongo pygmaeus (Bornean orangutan).